Here is a 383-residue protein sequence, read N- to C-terminus: UDP-N-acetylglucosamine--N-acetylmuramyl-(pentapeptide) pyrophosphoryl-undecaprenol N-acetylglucosamine transferase (383 aa).

UDP-N-acetyl-alpha-D-glucosamine-binding positions include 10–12, asparagine 124, arginine 165, serine 190, isoleucine 245, and glutamine 290; that span reads TGG. Residues 364-383 form a disordered region; that stretch reads PFGQAREPGQKPARPPDLAS.

Belongs to the glycosyltransferase 28 family. MurG subfamily.

Its subcellular location is the cell inner membrane. The catalysed reaction is di-trans,octa-cis-undecaprenyl diphospho-N-acetyl-alpha-D-muramoyl-L-alanyl-D-glutamyl-meso-2,6-diaminopimeloyl-D-alanyl-D-alanine + UDP-N-acetyl-alpha-D-glucosamine = di-trans,octa-cis-undecaprenyl diphospho-[N-acetyl-alpha-D-glucosaminyl-(1-&gt;4)]-N-acetyl-alpha-D-muramoyl-L-alanyl-D-glutamyl-meso-2,6-diaminopimeloyl-D-alanyl-D-alanine + UDP + H(+). It participates in cell wall biogenesis; peptidoglycan biosynthesis. Functionally, cell wall formation. Catalyzes the transfer of a GlcNAc subunit on undecaprenyl-pyrophosphoryl-MurNAc-pentapeptide (lipid intermediate I) to form undecaprenyl-pyrophosphoryl-MurNAc-(pentapeptide)GlcNAc (lipid intermediate II). This is UDP-N-acetylglucosamine--N-acetylmuramyl-(pentapeptide) pyrophosphoryl-undecaprenol N-acetylglucosamine transferase from Anaeromyxobacter dehalogenans (strain 2CP-C).